We begin with the raw amino-acid sequence, 440 residues long: MARPIVAVVGRPNVGKSTLFNKIAGERISIVENKPGVTRDRIYAEAEWLNYQFTLIDTGGIEPESEEIIPAQMRRQAELAMETANVIIFVVDGREGLTSVDRDVAELLRKTKKPVIVTLNKVDTRHQSEHFYEFYELGMGDPIEISASLGLGIGDLLDEVVKNFNPEDYNQYDDDVIKVAMIGKPNVGKSSLINRILGEERVIVSDIAGTTRDAIDTPFTDGDDRYVLIDTAGIRRKSRITESIEKYSIVRAIAAVEKSDVCLLVIDASEGVTEQDKKIAGYSHENGKGMVIVVNKWDIIEKDNHTMNEFIKEIRNELTYISYAPIVFVSALTGQRMNKILEEVKHVSNQNAMRIPTGALNEVIGEAILLNQAPSDKGKRLKVFYATQASVKPPTFILFINDKELMHFSYLRYLENKIRENFGFEGTPIRFILREKTGRD.

EngA-type G domains lie at 4–168 (PIVA…NPED) and 177–352 (IKVA…NQNA). GTP-binding positions include 10–17 (GRPNVGKS), 57–61 (DTGGI), 120–123 (NKVD), 183–190 (GKPNVGKS), 230–234 (DTAGI), and 295–298 (NKWD). The 85-residue stretch at 353–437 (MRIPTGALNE…PIRFILREKT (85 aa)) folds into the KH-like domain.

This sequence belongs to the TRAFAC class TrmE-Era-EngA-EngB-Septin-like GTPase superfamily. EngA (Der) GTPase family. As to quaternary structure, associates with the 50S ribosomal subunit.

Functionally, GTPase that plays an essential role in the late steps of ribosome biogenesis. In Alkaliphilus oremlandii (strain OhILAs) (Clostridium oremlandii (strain OhILAs)), this protein is GTPase Der.